The following is a 200-amino-acid chain: Glycosyl hydrolase family 19 domain-containing protein HI_1415 (200 aa).

It belongs to the glycosyl hydrolase 19 family.

The protein is Glycosyl hydrolase family 19 domain-containing protein HI_1415 of Haemophilus influenzae (strain ATCC 51907 / DSM 11121 / KW20 / Rd).